The sequence spans 170 residues: Zinc finger protein 576 (170 aa).

Residues 1 to 29 (MEDPNPEENMKQQDSPKERSPQSPGGNIC) are disordered. Positions 8 to 20 (ENMKQQDSPKERS) are enriched in basic and acidic residues. 4 C2H2-type zinc fingers span residues 34 to 57 (PKCT…KREH), 71 to 93 (FICF…QRSH), 112 to 134 (FPCP…RQMH), and 143 to 165 (FACT…YIRH).

It belongs to the krueppel C2H2-type zinc-finger protein family.

The protein resides in the nucleus. Its function is as follows. May be involved in transcriptional regulation. The polypeptide is Zinc finger protein 576 (ZNF576) (Homo sapiens (Human)).